A 257-amino-acid chain; its full sequence is 5-oxoprolinase subunit A (257 aa).

This sequence belongs to the LamB/PxpA family. As to quaternary structure, forms a complex composed of PxpA, PxpB and PxpC.

It catalyses the reaction 5-oxo-L-proline + ATP + 2 H2O = L-glutamate + ADP + phosphate + H(+). Its function is as follows. Catalyzes the cleavage of 5-oxoproline to form L-glutamate coupled to the hydrolysis of ATP to ADP and inorganic phosphate. This is 5-oxoprolinase subunit A from Bacillus subtilis (strain 168).